The chain runs to 491 residues: Cadherin-3 (491 aa).

3 consecutive Cadherin domains span residues 1–102 (ENTV…PPVF), 103–208 (VPPS…DHGP), and 209–314 (VPEP…DPWT). Topologically, residues 1–316 (ENTVSHEVQR…VTCRDPWTWG (316 aa)) are extracellular. Asn228 carries N-linked (GlcNAc...) asparagine glycosylation. The chain crosses the membrane as a helical span at residues 317-339 (FLLPILGAALALLLLLLVLLFLV). At 340–491 (RKKRKIKEPL…ADMYGGGQDD (152 aa)) the chain is on the cytoplasmic side.

Interacts with CDCP1 and CTNNB1.

It is found in the cell membrane. In terms of biological role, cadherins are calcium-dependent cell adhesion proteins. They preferentially interact with themselves in a homophilic manner in connecting cells; cadherins may thus contribute to the sorting of heterogeneous cell types. The protein is Cadherin-3 (CDH3) of Bos taurus (Bovine).